Consider the following 205-residue polypeptide: Adenylyl-sulfate kinase (205 aa).

Residue 31-38 (GLSGAGKS) participates in ATP binding. Residue Ser105 is the Phosphoserine intermediate of the active site.

The protein belongs to the APS kinase family.

It catalyses the reaction adenosine 5'-phosphosulfate + ATP = 3'-phosphoadenylyl sulfate + ADP + H(+). It functions in the pathway sulfur metabolism; hydrogen sulfide biosynthesis; sulfite from sulfate: step 2/3. Catalyzes the synthesis of activated sulfate. This Shewanella oneidensis (strain ATCC 700550 / JCM 31522 / CIP 106686 / LMG 19005 / NCIMB 14063 / MR-1) protein is Adenylyl-sulfate kinase.